The following is a 281-amino-acid chain: Beta-etherase (281 aa).

The GST N-terminal domain maps to 11–87 (DLQLESGCTI…YLDEKYPDRP (77 aa)). The tract at residues 244–281 (GDPEPFVRQTGPAGAGGQALNKGPQTTKMPPRVAEKAD) is disordered.

This sequence belongs to the GST superfamily.

Its subcellular location is the cell inner membrane. Able to degrade various dimeric lignin compounds. Catalyzes the unique and reductive cleavage of arylglycerol-beta-aryl ether. The protein is Beta-etherase (ligE) of Sphingobium sp. (strain NBRC 103272 / SYK-6).